We begin with the raw amino-acid sequence, 92 residues long: Putative pterin-4-alpha-carbinolamine dehydratase (92 aa).

This sequence belongs to the pterin-4-alpha-carbinolamine dehydratase family.

It catalyses the reaction (4aS,6R)-4a-hydroxy-L-erythro-5,6,7,8-tetrahydrobiopterin = (6R)-L-erythro-6,7-dihydrobiopterin + H2O. The protein is Putative pterin-4-alpha-carbinolamine dehydratase of Picosynechococcus sp. (strain ATCC 27264 / PCC 7002 / PR-6) (Agmenellum quadruplicatum).